The sequence spans 376 residues: uncharacterized protein (376 aa).

It belongs to the mimivirus R1 family.

This is an uncharacterized protein from Acanthamoeba polyphaga (Amoeba).